The chain runs to 283 residues: MKFGIVVNTNRPRAIAAGKELISWMRKEQIDFVLDANSAENLKESPSVEMENMHEQADFFVSLGGDGTLLGVSHFSNTKPIIGINLGRLGFLAEFCEHEMYDVIKRVLQNNFMLENRTQLEVSVSGKGQVRNFTGLNDVVIEKGTYPGVPVISVSIDNNLVSEYRADGVIIATSTGSTGYSLSAGGPIIIPKSKVFVVTPVCPHMLTVRPMVICDDKEIEVRVETPGDRFVLNCDGMLIQNISPSHQIRVRKAKNTVNLIANERRNYYNVLRQKFHWGKEQES.

Asp-66 serves as the catalytic Proton acceptor. NAD(+) contacts are provided by residues 66–67, 137–138, Arg-165, Asp-167, and 178–183; these read DG, ND, and TGYSLS.

It belongs to the NAD kinase family. A divalent metal cation serves as cofactor.

The protein resides in the cytoplasm. It catalyses the reaction NAD(+) + ATP = ADP + NADP(+) + H(+). Its function is as follows. Involved in the regulation of the intracellular balance of NAD and NADP, and is a key enzyme in the biosynthesis of NADP. Catalyzes specifically the phosphorylation on 2'-hydroxyl of the adenosine moiety of NAD to yield NADP. The sequence is that of NAD kinase from Chloroherpeton thalassium (strain ATCC 35110 / GB-78).